A 69-amino-acid chain; its full sequence is uncharacterized protein (69 aa).

Helical transmembrane passes span leucine 15–valine 35 and leucine 36–threonine 56.

Its subcellular location is the cell membrane. This is an uncharacterized protein from Methanocaldococcus jannaschii (strain ATCC 43067 / DSM 2661 / JAL-1 / JCM 10045 / NBRC 100440) (Methanococcus jannaschii).